Consider the following 445-residue polypeptide: MKMKAKWLPIAAGVTAALASQAAFAVDFHGYFRSGVGVSTDGSMQTGLSDNAKQKVGRLGNEADTYGEIQLGSEVFNKDGKTFYVDSMVAMTSNGSNDWESTESKFQCTSANGTALDGCENKEDATFALRQFNVQAKGLLGFAPEATLWAGKRYYQRHDVHISDFYYWNISGRGAGIEGIQAGPGKVSFAWVRNDRSGTNVDGTYNDEMNVNTLDLRYAGIPLWQDGSLEVGVDYAIANPSDAQKDSANAQYKNAKDGVMLTAELTQGILGGFNKTVLQYGTEGYSKTFAFWGDRSWYGAEAKDGADGFRIINHGVIPMGNSWEMGHQLVYGVGNDMWDTNDKWETMSVVARPMYKWDDFNKTIFEGGYFKDKNKSTNGTSEEDAGYKLTLAQAWSAGSSFWARPEIRVFASYLAQDKKEMKGNAFNNGTADDTWNFGVQAEAWW.

A signal peptide spans 1 to 25 (MKMKAKWLPIAAGVTAALASQAAFA).

This sequence belongs to the porin LamB (TC 1.B.3) family. As to quaternary structure, homotrimer formed of three 18-stranded antiparallel beta-barrels, containing three independent channels.

It localises to the cell outer membrane. It carries out the reaction beta-maltose(in) = beta-maltose(out). Functionally, involved in the transport of maltose and maltodextrins. The chain is Maltoporin from Aeromonas salmonicida.